The sequence spans 204 residues: Ancillary SecYEG translocon subunit (204 aa).

At 1-23 the chain is on the cytoplasmic side; it reads MAYSIEEEQEINQLKDWWKENGK. The chain crosses the membrane as a helical span at residues 24-42; it reads TIIVAFILGVGGMFGWRYW. Residues 43–204 are Periplasmic-facing; sequence QTHQAEQIAQ…QMAKMKLNNL (162 aa).

The protein belongs to the YfgM family. Interacts with the SecYEG translocon. Forms a complex with PpiD.

It localises to the cell inner membrane. May mediate protein transfer from the SecYEG translocon to the periplasmic chaperone network via its periplasmic C-terminal region. The sequence is that of Ancillary SecYEG translocon subunit from Haemophilus influenzae (strain ATCC 51907 / DSM 11121 / KW20 / Rd).